Consider the following 174-residue polypeptide: ATP-dependent protease subunit HslV (174 aa).

T2 is an active-site residue. Residues G157, C160, and T163 each coordinate Na(+).

The protein belongs to the peptidase T1B family. HslV subfamily. A double ring-shaped homohexamer of HslV is capped on each side by a ring-shaped HslU homohexamer. The assembly of the HslU/HslV complex is dependent on binding of ATP.

It localises to the cytoplasm. It catalyses the reaction ATP-dependent cleavage of peptide bonds with broad specificity.. Allosterically activated by HslU binding. Functionally, protease subunit of a proteasome-like degradation complex believed to be a general protein degrading machinery. This is ATP-dependent protease subunit HslV from Shewanella piezotolerans (strain WP3 / JCM 13877).